Here is a 182-residue protein sequence, read N- to C-terminus: Putative manganese efflux pump MntP (182 aa).

Helical transmembrane passes span 7–27 (IISI…VSLG), 38–58 (IAYI…AGML), 71–91 (TSFA…FSAF), 106–126 (LWII…GLGI), 131–151 (IFVT…LGML), and 159–179 (FLGV…GIFI).

The protein belongs to the MntP (TC 9.B.29) family.

The protein resides in the cell membrane. Its function is as follows. Probably functions as a manganese efflux pump. The sequence is that of Putative manganese efflux pump MntP from Oceanobacillus iheyensis (strain DSM 14371 / CIP 107618 / JCM 11309 / KCTC 3954 / HTE831).